The following is a 560-amino-acid chain: Zinc finger protein 250 (560 aa).

In terms of domain architecture, KRAB spans 22–93 (LTFEDVAVLL…DRKGAKKSQG (72 aa)). Residues Lys-125, Lys-136, Lys-148, and Lys-162 each participate in a glycyl lysine isopeptide (Lys-Gly) (interchain with G-Cter in SUMO2) cross-link. The C2H2-type 1 zinc finger occupies 199–221 (YMCVECGKCFGRSSHLLQHQRIH). A Glycyl lysine isopeptide (Lys-Gly) (interchain with G-Cter in SUMO2) cross-link involves residue Lys-225. 7 C2H2-type zinc fingers span residues 227-249 (YVCSVCGKAFSQSSVLSKHRRIH), 255-277 (YECNECGKAFRVSSDLAQHHKIH), 283-305 (HECLECRKAFTQLSHLIQHQRIH), 311-333 (YVCPLCGKAFNHSTVLRSHQRVH), 339-361 (HRCNECGKTFSVKRTLLQHQRIH), 367-389 (YTCSECGKAFSDRSVLIQHHNVH), and 395-417 (YECSECGKTFSHRSTLMNHERIH). Residue Lys-421 forms a Glycyl lysine isopeptide (Lys-Gly) (interchain with G-Cter in SUMO2) linkage. 5 consecutive C2H2-type zinc fingers follow at residues 423 to 445 (YACYECGKAFVQHSHLIQHQRVH), 451 to 473 (YVCGECGHAFSARRSLIQHERIH), 479 to 501 (FQCTECGKAFSLKATLIVHLRTH), 507 to 529 (YECNSCGKAFSQYSVLIQHQRIH), and 535 to 557 (YECGECGRAFNQHGHLIQHQKVH).

It belongs to the krueppel C2H2-type zinc-finger protein family.

The protein resides in the nucleus. Functionally, may be involved in transcriptional regulation. The polypeptide is Zinc finger protein 250 (ZNF250) (Homo sapiens (Human)).